A 41-amino-acid chain; its full sequence is Photosystem I reaction center subunit IX (41 aa).

The chain crosses the membrane as a helical span at residues 7–27 (YLSTAPVLLTIWLTFTAGFII).

The protein belongs to the PsaJ family.

Its subcellular location is the plastid. The protein localises to the chloroplast thylakoid membrane. In terms of biological role, may help in the organization of the PsaE and PsaF subunits. This is Photosystem I reaction center subunit IX from Phaeodactylum tricornutum (strain CCAP 1055/1).